Reading from the N-terminus, the 599-residue chain is MAYVPLSGTNVRILADVPFSNDYKNTRWFTSSSNQYNWFNSKTRVYEMSKVTFQGFRENKSYISVSLRLDLLYNASYIMFQNADYGNKWFYAFVTELEYKNVGTTYVHFEIDVLQTWMFNIKFQESFIVREHVKLWNDDGTPTINTIDEGLNYGSEYDIVSVENHRPYDDMMFLVVISKSIMHGTAGEAESRLNDINASLNGMPQPLCYYIHPFYKDGKVPKTFIGDNNANLSPIVNMLTNIFSQKSAVNNIVNMYVTDYIGLKLDYKNGDKELKLDKDMFEQAGIADDKHGNVDTIFVKKIPDYETLEIDTGDKWGGFTKDQESKLMMYPYCVTEVTDFKGNHMNLKTEYIDNNKLKIQVRGSLGVSNKVAYSIQDYNAGGSLSGGDRLTASLDTSLINNNPNDIAIINDYLSAYLQGNKNSLENQKSSILFNGIVGMLGGGVSAGASAVGRSPFGLASSVTGMTSTAGNAVLDMQALQAKQADIANIPPQLTKMGGNTAFDYGNGYRGVYVIKKQLKAEYRRSLSSFFHKYGYKINRVKKPNLRTRKAYNYIQTKDCFISGDINNNDLQEIRTIFDNGITLWHTDDIGNYSVENELR.

The protein belongs to the picovirinae distal tube protein family. Homohexamer; forms a hexameric tube structure with six flexible hydrophobic loops.

The protein resides in the virion. Its function is as follows. Distal (knob) tail protein that plugs the end of the tube before DNA ejection and forms a channel perforating the host membrane during ejection. The polypeptide is Tail knob protein gp9 (9) (Bacillus phage PZA (Bacteriophage PZA)).